A 460-amino-acid chain; its full sequence is Phosphomethylpyrimidine synthase (460 aa).

Residues N80, M109, Y138, H174, 194–196, 235–238, and E274 each bind substrate; these read SRG and DSLR. H278 lines the Zn(2+) pocket. Y301 provides a ligand contact to substrate. Residue H342 coordinates Zn(2+). 3 residues coordinate [4Fe-4S] cluster: C422, C425, and C430.

The protein belongs to the ThiC family. In terms of assembly, homodimer. It depends on [4Fe-4S] cluster as a cofactor.

It catalyses the reaction 5-amino-1-(5-phospho-beta-D-ribosyl)imidazole + S-adenosyl-L-methionine = 4-amino-2-methyl-5-(phosphooxymethyl)pyrimidine + CO + 5'-deoxyadenosine + formate + L-methionine + 3 H(+). The protein operates within cofactor biosynthesis; thiamine diphosphate biosynthesis. Functionally, catalyzes the synthesis of the hydroxymethylpyrimidine phosphate (HMP-P) moiety of thiamine from aminoimidazole ribotide (AIR) in a radical S-adenosyl-L-methionine (SAM)-dependent reaction. This is Phosphomethylpyrimidine synthase from Sulfurimonas denitrificans (strain ATCC 33889 / DSM 1251) (Thiomicrospira denitrificans (strain ATCC 33889 / DSM 1251)).